Reading from the N-terminus, the 96-residue chain is Co-chaperonin GroES (96 aa).

This sequence belongs to the GroES chaperonin family. In terms of assembly, heptamer of 7 subunits arranged in a ring. Interacts with the chaperonin GroEL.

The protein resides in the cytoplasm. Together with the chaperonin GroEL, plays an essential role in assisting protein folding. The GroEL-GroES system forms a nano-cage that allows encapsulation of the non-native substrate proteins and provides a physical environment optimized to promote and accelerate protein folding. GroES binds to the apical surface of the GroEL ring, thereby capping the opening of the GroEL channel. This is Co-chaperonin GroES from Methylibium petroleiphilum (strain ATCC BAA-1232 / LMG 22953 / PM1).